A 378-amino-acid polypeptide reads, in one-letter code: Tetraacyldisaccharide 4'-kinase (378 aa).

63-70 provides a ligand contact to ATP; sequence AVGGAGKT.

The protein belongs to the LpxK family.

It carries out the reaction a lipid A disaccharide + ATP = a lipid IVA + ADP + H(+). It functions in the pathway glycolipid biosynthesis; lipid IV(A) biosynthesis; lipid IV(A) from (3R)-3-hydroxytetradecanoyl-[acyl-carrier-protein] and UDP-N-acetyl-alpha-D-glucosamine: step 6/6. Functionally, transfers the gamma-phosphate of ATP to the 4'-position of a tetraacyldisaccharide 1-phosphate intermediate (termed DS-1-P) to form tetraacyldisaccharide 1,4'-bis-phosphate (lipid IVA). This Anaeromyxobacter dehalogenans (strain 2CP-C) protein is Tetraacyldisaccharide 4'-kinase.